Consider the following 304-residue polypeptide: uncharacterized protein (304 aa).

Active-site charge relay system residues include T58 and Y121. The active-site Proton donor is Y147. K175 acts as the Schiff-base intermediate with substrate in catalysis.

Belongs to the DapA family. In terms of assembly, homotetramer.

Its subcellular location is the cytoplasm. This is an uncharacterized protein from Halobacterium salinarum (strain ATCC 29341 / DSM 671 / R1).